Consider the following 452-residue polypeptide: Protein disulfide-isomerase TMX3 (452 aa).

Residues 1 to 26 (MAAAGLCFILAIVSSTSLLASVPVSA) form the signal peptide. The Thioredoxin domain occupies 27–128 (LVEDLDDSFK…KEDIVEFANR (102 aa)). Topologically, residues 27 to 375 (LVEDLDDSFK…TVVSVFKSSP (349 aa)) are lumenal. Active-site nucleophile residues include Cys53 and Cys56. A disulfide bond links Cys53 and Cys56. Asn258 and Asn313 each carry an N-linked (GlcNAc...) asparagine glycan. A helical transmembrane segment spans residues 376 to 396 (LLGCFLFGLPLGVISIMCYGI). Topologically, residues 397–452 (CTADTEDGSEEMTRKDVIDQNASDEGSDEEEEKGREITDVSDEDQQEKDFMEKKID) are cytoplasmic. Residues 405-452 (SEEMTRKDVIDQNASDEGSDEEEEKGREITDVSDEDQQEKDFMEKKID) form a disordered region. Residues 443-452 (EKDFMEKKID) show a composition bias toward basic and acidic residues. The Di-lysine motif motif lies at 449–452 (KKID).

The protein belongs to the protein disulfide isomerase family.

The protein localises to the endoplasmic reticulum membrane. It catalyses the reaction Catalyzes the rearrangement of -S-S- bonds in proteins.. Probable disulfide isomerase, which participates in the folding of proteins containing disulfide bonds. May act as a dithiol oxidase. Acts as a regulator of endoplasmic reticulum-mitochondria contact sites via its ability to regulate redox signals. This Xenopus laevis (African clawed frog) protein is Protein disulfide-isomerase TMX3 (tmx3).